Here is a 109-residue protein sequence, read N- to C-terminus: Large ribosomal subunit protein uL24 (109 aa).

This sequence belongs to the universal ribosomal protein uL24 family. Part of the 50S ribosomal subunit.

One of two assembly initiator proteins, it binds directly to the 5'-end of the 23S rRNA, where it nucleates assembly of the 50S subunit. Functionally, one of the proteins that surrounds the polypeptide exit tunnel on the outside of the subunit. The polypeptide is Large ribosomal subunit protein uL24 (Mesoplasma florum (strain ATCC 33453 / NBRC 100688 / NCTC 11704 / L1) (Acholeplasma florum)).